A 232-amino-acid chain; its full sequence is Ribonuclease P protein component 3 (232 aa).

It belongs to the eukaryotic/archaeal RNase P protein component 3 family. As to quaternary structure, consists of a catalytic RNA component and at least 4-5 protein subunits. Forms a subcomplex with Rnp2 which stimulates the catalytic RNA.

The protein localises to the cytoplasm. It catalyses the reaction Endonucleolytic cleavage of RNA, removing 5'-extranucleotides from tRNA precursor.. Its function is as follows. Part of ribonuclease P, a protein complex that generates mature tRNA molecules by cleaving their 5'-ends. In Methanocaldococcus jannaschii (strain ATCC 43067 / DSM 2661 / JAL-1 / JCM 10045 / NBRC 100440) (Methanococcus jannaschii), this protein is Ribonuclease P protein component 3.